The primary structure comprises 717 residues: PAN2-PAN3 deadenylation complex subunit PAN3 (717 aa).

The C3H1-type zinc-finger motif lies at 8–37 (WARDVPCRNVIIYGFCKKKTEGCPFKHDDD). The disordered stretch occupies residues 37–100 (DDIATPTSTP…HTGSKSQVPK (64 aa)). A compositionally biased stretch (low complexity) spans 62–90 (PSKISVSSLPSLNSQPSSTAPTSAPNATA). The segment covering 91–100 (HTGSKSQVPK) has biased composition (polar residues). The interval 323-585 (QLFPSGGNLP…ATIIEKYIGL (263 aa)) is pseudokinase domain. ATP contacts are provided by residues arginine 378, 428 to 435 (DYYPNATS), and 482 to 483 (DK). The stretch at 586–624 (DVVFKVMEAQQTYSEYAENVLSRELENGRLFRLICKLNF) forms a coiled coil. The interval 625-717 (IFGRVENRLD…VDKTFRAMTL (93 aa)) is knob domain.

The protein belongs to the protein kinase superfamily. PAN3 family. In terms of assembly, homodimer. Forms a heterotrimer with a catalytic subunit PAN2 to form the poly(A)-nuclease (PAN) deadenylation complex. Interacts (via PAM-2 motif) with poly(A)-binding protein PAB1 (via PABC domain), conferring substrate specificity of the enzyme complex.

The protein localises to the cytoplasm. Regulatory subunit of the poly(A)-nuclease (PAN) deadenylation complex, one of two cytoplasmic mRNA deadenylases involved in mRNA turnover. PAN specifically shortens poly(A) tails of RNA and the activity is stimulated by poly(A)-binding protein PAB1. PAN deadenylation is followed by rapid degradation of the shortened mRNA tails by the CCR4-NOT complex. Deadenylated mRNAs are then degraded by two alternative mechanisms, namely exosome-mediated 3'-5' exonucleolytic degradation, or deadenylation-dependent mRNA decaping and subsequent 5'-3' exonucleolytic degradation by XRN1. May also be involved in post-transcriptional maturation of mRNA poly(A) tails. PAN3 acts as a positive regulator for PAN activity, recruiting the catalytic subunit PAN2 to mRNA via its interaction with RNA and with PAB1. This chain is PAN2-PAN3 deadenylation complex subunit PAN3, found in Candida glabrata (strain ATCC 2001 / BCRC 20586 / JCM 3761 / NBRC 0622 / NRRL Y-65 / CBS 138) (Yeast).